Here is a 427-residue protein sequence, read N- to C-terminus: MAATDVQRASNEEKRSLAMSGHVGFDSLPDQLVSKSVTQGFCFNILCVGETGIGKSTLMNTLFNTTFETEEASHYENGVCLRPRTYDLQESNVHLKLTIVDTVGFGDQINKDDSYRSVVDYIDTQFENYLQEELKIRRSLFNFHDSRIHVCLYFITPTGHSLKSLDLVTMKKLDSKVNIIPIIAKADTISKSELHKFKIKIMSELVSNGVQIYQFPTDDDAVAEINSVMNAHLPFAVVGSTEEVKVGNKLVRARQYPWGVVQVENESHCDFVKLREMLIRVNMEDLREQTHTRHYELYRRCKLEEMGFKDNDPDTQPFSLQETYEAKRKEFLSELQRKEEEMRQMFVNKVKETEAELKERERELQEKFMQLKRIHQEESKKVEDKRRDLEEEMNSFNRRKAAMEALQSQSFQATSQQPLKKDKDRKN.

The 267-residue stretch at 39-305 folds into the Septin-type G domain; sequence QGFCFNILCV…ELYRRCKLEE (267 aa). The tract at residues 49-56 is G1 motif; that stretch reads GETGIGKS. GTP contacts are provided by residues 49 to 56, G104, 185 to 193, G239, and R254; these read GETGIGKS and KADTISKSE. Residues 101–104 form a G3 motif region; sequence DTVG. Positions 184-187 are G4 motif; it reads AKAD. The stretch at 320–409 forms a coiled coil; the sequence is LQETYEAKRK…KAAMEALQSQ (90 aa). Residues 376-389 are compositionally biased toward basic and acidic residues; that stretch reads QEESKKVEDKRRDL. A disordered region spans residues 376–427; sequence QEESKKVEDKRRDLEEEMNSFNRRKAAMEALQSQSFQATSQQPLKKDKDRKN. A compositionally biased stretch (polar residues) spans 406–418; it reads LQSQSFQATSQQP.

The protein belongs to the TRAFAC class TrmE-Era-EngA-EngB-Septin-like GTPase superfamily. Septin GTPase family.

This Xenopus laevis (African clawed frog) protein is Septin-8-A (sept8-a).